The primary structure comprises 1121 residues: Piwi-like protein ergo-1 (1121 aa).

Over residues 1-14 (MSYNNGGGGGGGGY) the composition is skewed to gly residues. The interval 1–134 (MSYNNGGGGG…GNRGGGGGRV (134 aa)) is disordered. 2 stretches are compositionally biased toward basic and acidic residues: residues 15–29 (RNDR…DRQN) and 40–77 (YNDD…DRRG). The span at 99 to 112 (GSNQRNDNYGNNRG) shows a compositional bias: polar residues. Positions 125–134 (GNRGGGGGRV) are enriched in gly residues. One can recognise a PAZ domain in the interval 426–534 (VMTQILTKMT…MPLELVSYIV (109 aa)). Positions 774–1081 (NVLKYLADNK…AAKRAKETLD (308 aa)) constitute a Piwi domain.

This sequence belongs to the argonaute family. Piwi subfamily. In terms of assembly, interacts with rde-12. Interacts with rde-10. Highly expressed in the germline in hermaphrodites.

It is found in the cytoplasm. In terms of biological role, argonaute protein required for gene silencing in the endogenous RNA interference (RNAi) pathway. Involved in the 26G RNAi pathway and associates with both unmethylated and methylated 26G small interfering RNAs (26G-siRNAs), which are a class of 26 nucleotide siRNAs that possess a guanine residue at the 5'-end. Associated 26G-siRNAs are methylated by the methyltransferase henn-1, which stabilizes the siRNAs. Association with 26G-siRNAs is required for the biogenesis of secondary 22G-siRNAs (a class of 22 nucleotide siRNAs that possess a triphosphorylated guanine residue at the 5'-end). May be involved in passenger strand cleavage of target 26G-siRNAs. The protein is Piwi-like protein ergo-1 of Caenorhabditis elegans.